The chain runs to 141 residues: Large ribosomal subunit protein uL11 (141 aa).

Belongs to the universal ribosomal protein uL11 family. In terms of assembly, part of the ribosomal stalk of the 50S ribosomal subunit. Interacts with L10 and the large rRNA to form the base of the stalk. L10 forms an elongated spine to which L12 dimers bind in a sequential fashion forming a multimeric L10(L12)X complex. One or more lysine residues are methylated.

In terms of biological role, forms part of the ribosomal stalk which helps the ribosome interact with GTP-bound translation factors. This chain is Large ribosomal subunit protein uL11, found in Pediococcus pentosaceus (strain ATCC 25745 / CCUG 21536 / LMG 10740 / 183-1w).